A 257-amino-acid chain; its full sequence is Global transcriptional regulator CodY (257 aa).

A GAF domain region spans residues 1–155 (MSLLSKTREL…AATVIGMEIL (155 aa)). 6 residues coordinate GTP: V22, F24, S43, R44, R45, and K47. Residues R61, T96, and F98 each contribute to the L-isoleucine site. 2 residues coordinate GTP: E153 and K158. The segment at residues 203 to 222 (ASKVADRVGITRSVIVNALR) is a DNA-binding region (H-T-H motif).

This sequence belongs to the CodY family. As to quaternary structure, homodimer. Homotetramer. May form homodimers under conditions in which energy sources are sufficient (active state) and homotetramers under insufficient nutrient conditions (inactive state).

The protein resides in the cytoplasm. With respect to regulation, activity of CodY is modulated by interaction with two types of effectors: the branched-chain amino acids (BCAAs) leucine, isoleucine and valine, which are signals of the nutritional status of the cell, and GTP, which may signal the energetic status of the cell. In terms of biological role, DNA-binding global transcriptional regulator which is involved in the adaptive response to starvation and acts by directly or indirectly controlling the expression of numerous genes in response to nutrient availability. During rapid exponential growth, CodY is highly active and represses genes whose products allow adaptation to nutrient depletion. The protein is Global transcriptional regulator CodY of Staphylococcus aureus (strain Mu3 / ATCC 700698).